We begin with the raw amino-acid sequence, 348 residues long: UDP-glucose 4-epimerase (348 aa).

Residues 12–14 (GYI), 33–37 (DNFHN), 66–67 (DI), F88, and K92 contribute to the NAD(+) site. 132–134 (SAT) is a substrate binding site. Y157 functions as the Proton acceptor in the catalytic mechanism. 2 residues coordinate NAD(+): K161 and Y185. Substrate-binding positions include 185-187 (YFN), 206-208 (NNL), 224-226 (NVF), R239, and 300-303 (REGD).

This sequence belongs to the NAD(P)-dependent epimerase/dehydratase family. Homodimer. The cofactor is NAD(+).

It catalyses the reaction UDP-alpha-D-glucose = UDP-alpha-D-galactose. It carries out the reaction UDP-N-acetyl-alpha-D-glucosamine = UDP-N-acetyl-alpha-D-galactosamine. It participates in carbohydrate metabolism; galactose metabolism. Its function is as follows. Catalyzes two distinct but analogous reactions: the reversible epimerization of UDP-glucose to UDP-galactose and the reversible epimerization of UDP-N-acetylglucosamine to UDP-N-acetylgalactosamine. The reaction with UDP-Gal plays a critical role in the Leloir pathway of galactose catabolism in which galactose is converted to the glycolytic intermediate glucose 6-phosphate. It contributes to the catabolism of dietary galactose and enables the endogenous biosynthesis of both UDP-Gal and UDP-GalNAc when exogenous sources are limited. Both UDP-sugar interconversions are important in the synthesis of glycoproteins and glycolipids. This chain is UDP-glucose 4-epimerase, found in Bos taurus (Bovine).